Reading from the N-terminus, the 421-residue chain is 3-alpha-mycarosylerythronolide B desosaminyl transferase (421 aa).

An N-terminal signal peptide occupies residues 1–23 (MRVVFSSMASKSHLFGLVPLAWA).

The protein belongs to the glycosyltransferase 28 family. In terms of assembly, heterotetramer composed of EryCII and EryCIII.

The catalysed reaction is 3-O-alpha-L-mycarosylerythronolide B + dTDP-alpha-D-desosamine = erythromycin D + dTDP + H(+). It functions in the pathway antibiotic biosynthesis; erythromycin biosynthesis. Functionally, catalyzes the conversion of alpha-L-mycarosylerythronolide B into erythromycin D in the erythromycin biosynthesis pathway. The polypeptide is 3-alpha-mycarosylerythronolide B desosaminyl transferase (eryCIII) (Saccharopolyspora erythraea (strain ATCC 11635 / DSM 40517 / JCM 4748 / NBRC 13426 / NCIMB 8594 / NRRL 2338)).